Here is a 493-residue protein sequence, read N- to C-terminus: Bifunctional protein GlmU (493 aa).

The segment at 1-246 (MTGELDVDGE…SWLVAGINDR (246 aa)) is pyrophosphorylase. UDP-N-acetyl-alpha-D-glucosamine contacts are provided by residues 21–24 (LAAG), lysine 35, glutamine 88, 93–94 (GT), 117–119 (SGD), glycine 156, glutamate 171, asparagine 186, and asparagine 244. Position 119 (aspartate 119) interacts with Mg(2+). Residue asparagine 244 coordinates Mg(2+). Residues 247 to 267 (VQLTAAATELNARIIRRWQLA) are linker. The segment at 268–493 (GVTIHDPRTT…DGPADDASDA (226 aa)) is N-acetyltransferase. Residues arginine 349 and lysine 367 each coordinate UDP-N-acetyl-alpha-D-glucosamine. The Proton acceptor role is filled by histidine 379. The UDP-N-acetyl-alpha-D-glucosamine site is built by tyrosine 382 and asparagine 393. Residues alanine 396, 402–403 (NY), serine 421, and alanine 439 each bind acetyl-CoA. Residues 470–493 (RPGTPEARAAVEAADGPADDASDA) form a disordered region.

It in the N-terminal section; belongs to the N-acetylglucosamine-1-phosphate uridyltransferase family. The protein in the C-terminal section; belongs to the transferase hexapeptide repeat family. In terms of assembly, homotrimer. The cofactor is Mg(2+).

It is found in the cytoplasm. It catalyses the reaction alpha-D-glucosamine 1-phosphate + acetyl-CoA = N-acetyl-alpha-D-glucosamine 1-phosphate + CoA + H(+). It carries out the reaction N-acetyl-alpha-D-glucosamine 1-phosphate + UTP + H(+) = UDP-N-acetyl-alpha-D-glucosamine + diphosphate. It functions in the pathway nucleotide-sugar biosynthesis; UDP-N-acetyl-alpha-D-glucosamine biosynthesis; N-acetyl-alpha-D-glucosamine 1-phosphate from alpha-D-glucosamine 6-phosphate (route II): step 2/2. The protein operates within nucleotide-sugar biosynthesis; UDP-N-acetyl-alpha-D-glucosamine biosynthesis; UDP-N-acetyl-alpha-D-glucosamine from N-acetyl-alpha-D-glucosamine 1-phosphate: step 1/1. Its pathway is bacterial outer membrane biogenesis; LPS lipid A biosynthesis. Catalyzes the last two sequential reactions in the de novo biosynthetic pathway for UDP-N-acetylglucosamine (UDP-GlcNAc). The C-terminal domain catalyzes the transfer of acetyl group from acetyl coenzyme A to glucosamine-1-phosphate (GlcN-1-P) to produce N-acetylglucosamine-1-phosphate (GlcNAc-1-P), which is converted into UDP-GlcNAc by the transfer of uridine 5-monophosphate (from uridine 5-triphosphate), a reaction catalyzed by the N-terminal domain. This chain is Bifunctional protein GlmU, found in Clavibacter sepedonicus (Clavibacter michiganensis subsp. sepedonicus).